The sequence spans 128 residues: Early 4 ORF1 protein (128 aa).

The Cytoplasmic portion of the chain corresponds to 1 to 26 (MAAAVEALYVVLEREGAILPRQEGFS). Residues 27–47 (GVYVFFSPINFVIPPMGAVML) traverse the membrane as a helical segment. The Extracellular segment spans residues 48-99 (SLRLRVCIPPGYFGRFLALTDVNQPDVFTESYIMTPDMTEELSVVLFNHGDQ). Residues 100-120 (FFYGHAGMAVVRLMLIRVVFP) form a helical membrane-spanning segment. The Cytoplasmic segment spans residues 121 to 128 (VVRQASNV). A PBZ domain binding motif motif is present at residues 125 to 128 (ASNV).

It belongs to the adenoviridae E4-ORF1 family. As to quaternary structure, may interact with host PDZ proteins through the PDZ domain binding motif (PBM), namely host DLG1, PATJ and TJP2.

The protein resides in the host membrane. In terms of biological role, may modulate tight-junctions functions of infected cells through interactions with PDZ proteins. E4 ORF1 has ben show for Adenovirus 9 to interact with protein involved in tight junction regulation. May play a role in mTOR activation by activating PI3-kinase, thus overriding cellular checkpoint for translation. This chain is Early 4 ORF1 protein, found in Human adenovirus C serotype 2 (HAdV-2).